A 322-amino-acid polypeptide reads, in one-letter code: MASEIPYDESPSGEESGEIKCKNIVTDPVRGLKICADTGEIIGEDIIGTESDVKAYTPEERQQKTHYGGPLKYSHHYMGVEASLEHPRDHGPKGIKQRKILPRRPPRLSARPLTSVDKNLQTALSLINEVASRMGMPEIVVEDASKIYREAMEKGLTRGRSIESIVAASLYAASRIHGLPHSLTDIIKAMKGNVDAETRRDVARSYRLLVRDLNIKIPVRKPENFVYTIISALGLPEHVAIEAIKIIDLSRKKGLTAGKDPGGLAGAAVYLAALKHGIRKTQKEIAHVVGVTEVTIRNRYKEIAQALGIEEELEEKGGEEKG.

2 tandem repeats follow at residues 125 to 213 and 224 to 305.

Belongs to the TFIIB family.

Its function is as follows. Stabilizes TBP binding to an archaeal box-A promoter. Also responsible for recruiting RNA polymerase II to the pre-initiation complex (DNA-TBP-TFIIB). The sequence is that of Transcription initiation factor IIB from Aeropyrum pernix (strain ATCC 700893 / DSM 11879 / JCM 9820 / NBRC 100138 / K1).